Consider the following 365-residue polypeptide: Chorismate synthase (365 aa).

Arginine 48 and arginine 54 together coordinate NADP(+). FMN contacts are provided by residues 131 to 133, 243 to 244, glycine 288, 303 to 307, and arginine 329; these read RSS, NA, and KPTSS.

The protein belongs to the chorismate synthase family. In terms of assembly, homotetramer. The cofactor is FMNH2.

The catalysed reaction is 5-O-(1-carboxyvinyl)-3-phosphoshikimate = chorismate + phosphate. Its pathway is metabolic intermediate biosynthesis; chorismate biosynthesis; chorismate from D-erythrose 4-phosphate and phosphoenolpyruvate: step 7/7. In terms of biological role, catalyzes the anti-1,4-elimination of the C-3 phosphate and the C-6 proR hydrogen from 5-enolpyruvylshikimate-3-phosphate (EPSP) to yield chorismate, which is the branch point compound that serves as the starting substrate for the three terminal pathways of aromatic amino acid biosynthesis. This reaction introduces a second double bond into the aromatic ring system. In Sinorhizobium medicae (strain WSM419) (Ensifer medicae), this protein is Chorismate synthase.